The following is a 280-amino-acid chain: UPF0758 protein Atu1607 (280 aa).

A disordered region spans residues 1-22; that stretch reads MAKRPALPSADLSPTSGFEAGE. The region spanning 158–280 is the MPN domain; the sequence is VLGSWSSVID…HASFKGLRLI (123 aa). Positions 229, 231, and 242 each coordinate Zn(2+). A JAMM motif motif is present at residues 229 to 242; sequence HNHPSGDPTPSRAD.

It belongs to the UPF0758 family.

The protein is UPF0758 protein Atu1607 of Agrobacterium fabrum (strain C58 / ATCC 33970) (Agrobacterium tumefaciens (strain C58)).